The chain runs to 752 residues: Palmitoyltransferase AKR1 (752 aa).

Disordered regions lie at residues 1–21 (MTAEEVDKESDPAIEDVKSDY) and 49–68 (ASSELKHENDQGEERDLGSV). Topologically, residues 1–318 (MTAEEVDKES…FPLPQYFSAS (318 aa)) are cytoplasmic. Composition is skewed to basic and acidic residues over residues 9–21 (ESDPAIEDVKSDY) and 51–68 (SELKHENDQGEERDLGSV). 6 ANK repeats span residues 72-102 (PILERYHAACKQGDMKTLREMVESKVIDLSN), 108-137 (ERVSGLHWACINNRLSAVKYLAGAGAEVNF), 142-171 (LDATPLHWASKSGLVYIVDELLKAGADPNI), 175-208 (QGYNLLHTSVFSSNIMLVIYVLFFVVDGKEDVDQ), 212-241 (HQRTALQWATYQADALTVENLLKFNADVKN), and 245-274 (AGFTALHWGTVKGSIPVMDLLIKHGSDFFQ). Residues 319–339 (TGKMLTFFLPWVLIPLVFYIF) traverse the membrane as a helical segment. The Lumenal segment spans residues 340–341 (SK). The chain crosses the membrane as a helical span at residues 342-362 (ITFFIALLINTIVLVISGLVL). The Cytoplasmic portion of the chain corresponds to 363-380 (SRLVVPSYLLSKRHPILN). The chain crosses the membrane as a helical span at residues 381 to 401 (SPLLAGILSGTIAIAFFIWFT). Over 402 to 412 (KISILTFTEKP) the chain is Lumenal. The chain crosses the membrane as a helical span at residues 413–433 (VGNIIMLGFFIGLITLFIGLM). The Cytoplasmic portion of the chain corresponds to 434–509 (KSDPGYIPGT…YNQIGLLNHK (76 aa)). The DHHC domain maps to 466–516 (HFCVHTWIRIPLRSKYDRDSACLISAFDHFCPWVYNQIGLLNHKLFYMFVV). C496 (S-palmitoyl cysteine intermediate) is an active-site residue. Residues 510 to 530 (LFYMFVVLLEISVWWFLPLMM) traverse the membrane as a helical segment. The Lumenal segment spans residues 531–567 (EYFDELEDYLENRKGKHFGDCHFLGDEDLCFGLHHDT). A helical membrane pass occupies residues 568–588 (FNFLLLCWVIFQAFWVLCLIA). Residues 589–752 (VQTVQMLKGV…TLPNATEELV (164 aa)) are Cytoplasmic-facing.

This sequence belongs to the DHHC palmitoyltransferase family. AKR/ZDHHC17 subfamily.

It is found in the early endosome membrane. It localises to the golgi apparatus membrane. It carries out the reaction L-cysteinyl-[protein] + hexadecanoyl-CoA = S-hexadecanoyl-L-cysteinyl-[protein] + CoA. Palmitoyltransferase specific for casein kinase 1. The protein is Palmitoyltransferase AKR1 (AKR1) of Kluyveromyces lactis (strain ATCC 8585 / CBS 2359 / DSM 70799 / NBRC 1267 / NRRL Y-1140 / WM37) (Yeast).